A 148-amino-acid chain; its full sequence is Arginine repressor (148 aa).

Belongs to the ArgR family.

The protein localises to the cytoplasm. It participates in amino-acid biosynthesis; L-arginine biosynthesis [regulation]. In terms of biological role, regulates arginine biosynthesis genes. The chain is Arginine repressor from Koribacter versatilis (strain Ellin345).